Here is a 146-residue protein sequence, read N- to C-terminus: Oxygen-independent coproporphyrinogen III oxidase (146 aa).

Residue Tyr54 coordinates S-adenosyl-L-methionine. Residues Cys60 and Cys64 each contribute to the [4Fe-4S] cluster site. Phe66 contributes to the S-adenosyl-L-methionine binding site. A [4Fe-4S] cluster-binding site is contributed by Cys67. Residues Gly111–Thr112 and Glu143 each bind S-adenosyl-L-methionine.

It belongs to the anaerobic coproporphyrinogen-III oxidase family. As to quaternary structure, monomer. The cofactor is [4Fe-4S] cluster.

It is found in the cytoplasm. It carries out the reaction coproporphyrinogen III + 2 S-adenosyl-L-methionine = protoporphyrinogen IX + 2 5'-deoxyadenosine + 2 L-methionine + 2 CO2. It participates in porphyrin-containing compound metabolism; protoporphyrin-IX biosynthesis; protoporphyrinogen-IX from coproporphyrinogen-III (AdoMet route): step 1/1. Its function is as follows. Involved in the heme biosynthesis. Catalyzes the anaerobic oxidative decarboxylation of propionate groups of rings A and B of coproporphyrinogen III to yield the vinyl groups in protoporphyrinogen IX. The polypeptide is Oxygen-independent coproporphyrinogen III oxidase (hemN) (Mannheimia haemolytica (Pasteurella haemolytica)).